We begin with the raw amino-acid sequence, 200 residues long: 3-isopropylmalate dehydratase small subunit (200 aa).

It belongs to the LeuD family. LeuD type 1 subfamily. Heterodimer of LeuC and LeuD.

It carries out the reaction (2R,3S)-3-isopropylmalate = (2S)-2-isopropylmalate. Its pathway is amino-acid biosynthesis; L-leucine biosynthesis; L-leucine from 3-methyl-2-oxobutanoate: step 2/4. In terms of biological role, catalyzes the isomerization between 2-isopropylmalate and 3-isopropylmalate, via the formation of 2-isopropylmaleate. This is 3-isopropylmalate dehydratase small subunit from Vibrio atlanticus (strain LGP32) (Vibrio splendidus (strain Mel32)).